Reading from the N-terminus, the 188-residue chain is Phosphoheptose isomerase (188 aa).

Residues Val-33–Ser-188 form the SIS domain. Asn-48–Gly-50 lines the substrate pocket. The Zn(2+) site is built by His-57 and Glu-61. Residues Glu-61, Asn-90 to Asp-91, Ser-116 to Ser-118, Ser-121, and Gln-168 contribute to the substrate site. The Zn(2+) site is built by Gln-168 and His-176.

It belongs to the SIS family. GmhA subfamily. As to quaternary structure, homotetramer. The cofactor is Zn(2+).

It is found in the cytoplasm. The enzyme catalyses 2 D-sedoheptulose 7-phosphate = D-glycero-alpha-D-manno-heptose 7-phosphate + D-glycero-beta-D-manno-heptose 7-phosphate. The protein operates within carbohydrate biosynthesis; D-glycero-D-manno-heptose 7-phosphate biosynthesis; D-glycero-alpha-D-manno-heptose 7-phosphate and D-glycero-beta-D-manno-heptose 7-phosphate from sedoheptulose 7-phosphate: step 1/1. Catalyzes the isomerization of sedoheptulose 7-phosphate in D-glycero-D-manno-heptose 7-phosphate. The protein is Phosphoheptose isomerase of Rhodospirillum rubrum (strain ATCC 11170 / ATH 1.1.1 / DSM 467 / LMG 4362 / NCIMB 8255 / S1).